The following is a 215-amino-acid chain: MSCTIEKVLADAKELVERLREHDGAAESLIEQTTTLNKRVEAMKQYQEEVQELNEIARHRPRSTLVLGIQQENRQIRQLQHENKELRTSLKEHQSALELIMSKYREQMFRLLMASKKDDPGVIMKLKEQHSKELQAHIEKINEMTAVMRRAIEMDEQRGDREHNRIIKLEQENKRLREILQITKISFLNLHKEDASENSPHSAPVPNTDLILRKS.

The stretch at 12–186 (AKELVERLRE…REILQITKIS (175 aa)) forms a coiled coil. The disordered stretch occupies residues 193–215 (EDASENSPHSAPVPNTDLILRKS).

The protein belongs to the SIKE family.

The protein resides in the cytoplasm. The chain is FGFR1 oncogene partner 2 homolog (fgfr1op2) from Xenopus laevis (African clawed frog).